Reading from the N-terminus, the 973-residue chain is MERMNWLSRLASRGPGHRVPQGASLQTPVMADPETCLMVFKNHWSQVVRILERQGPRAAPGGADDLSAVRNHTYQMLTLLAEDRAVPLVPTAPGPLLEFALREDLLTRVLTWQLQWDELGDGVEERRAEQLKLFEMLVSEARQPLLRHGPVREALLILLDACGRPVPSSPALDEGLVLLLSQLCVCLAREPSLLEFFLQPPPEPGAAPRLLLFSRLVPFVHREGTLGQQARDALLLLMALSAGSPTVGCYIADHSYFCPVLATGLSALYSSLPRKIEVPGDDWHCLRREDWLGVPALALFMSSLEFCNAVIQVAHPLVQKQLVDYIHNGFLVPVMGPALHKTSVEEMIASTAYLELFLRSISEPALLRTFLRFLLLHRHDTHTILDTLVARIGSNSRLCMVSLSLFRTLLNLSCEDVLLQLVLRYLVPCNHVMLSQKPAVRDVDLYGRAADKFLSLIPRCCRHHASSPSRPEHASWARGPGSPSVDSSSVVTVHRPSTPSRLALFLRQQSLGGSESPAPAPRSPGLATSPASSPGRRPSPVEEPGELEDNYLEYLREARRGVDRCVQACRTWSAPYDGERPPPEPSPVGSRTKKRSLLPEEGRDNAGGGEEEELGSGGLAGGARESLGHLPPPQLNGLPGPWPEGAKKVRRVPKEGAGEPLEDTSEGMAGLEGFGQELRELEVALSNGGAGSEPPLEPSLPLEEEEAYESFTCSPEPPGPFLSSPLRTLNQLPSQPFTGPFMAVLFAKLENMLQNSVYVNFLLTGLVAQLACHPQPLLRSFLLNTNMVFQPSVKSLLQVLGSVKNKIESFAASQEDFPALLSKAKKYLIARGKLDWTEGPAAGPAPRRSDSLVKSRRPSLGELLLRHAHSPTRARQAAQMVLQPGRDGGAGLGLGGGSPGASTPVLPARGGAPERQGEALRVKNAVYCAVIFPEFLKELAAISQAHAVTSPFLLDTSEEGSGPPVSGFGPLNP.

Disordered stretches follow at residues 466 to 493 (SSPS…VVTV), 510 to 547 (SLGG…PGEL), and 573 to 647 (SAPY…EGAK). Phosphoserine is present on Ser-467. Positions 482-493 (SPSVDSSSVVTV) are enriched in low complexity. Phosphoserine is present on residues Ser-510, Ser-523, Ser-529, and Ser-533. Composition is skewed to low complexity over residues 529 to 538 (SPASSPGRRP) and 622 to 639 (GARE…NGLP). 2 positions are modified to phosphoserine: Ser-859 and Ser-898.

The protein belongs to the FHIP family. In terms of assembly, component of the FTS/Hook/FHIP complex (FHF complex), composed of AKTIP/FTS, FHIP1B, and one or more members of the Hook family of proteins HOOK1, HOOK2, and HOOK3. The FHF complex associates with the homotypic vesicular sorting complex (the HOPS complex).

Component of the FTS/Hook/FHIP complex (FHF complex). The FHF complex may function to promote vesicle trafficking and/or fusion via the homotypic vesicular protein sorting complex (the HOPS complex). FHF complex promotes the distribution of AP-4 complex to the perinuclear area of the cell. This is FHF complex subunit HOOK-interacting protein 1B (FHIP1B) from Bos taurus (Bovine).